We begin with the raw amino-acid sequence, 586 residues long: Acyl-coenzyme A synthetase ACSM3, mitochondrial (586 aa).

Residues 1–27 (MLARVTRKMLRHAKCFQRLAIFGSVRA) constitute a mitochondrion transit peptide. N6-succinyllysine is present on residues K73 and K106. At K157 the chain carries N6-acetyllysine. Residues 235-243 (TSGTSGYPK), 374-379 (EGYGQT), D461, R476, and K572 each bind ATP.

It belongs to the ATP-dependent AMP-binding enzyme family. Mg(2+) serves as cofactor. Requires Mn(2+) as cofactor.

The protein localises to the mitochondrion. It is found in the mitochondrion matrix. The catalysed reaction is a medium-chain fatty acid + ATP + CoA = a medium-chain fatty acyl-CoA + AMP + diphosphate. It carries out the reaction propanoate + ATP + CoA = propanoyl-CoA + AMP + diphosphate. It catalyses the reaction butanoate + ATP + CoA = butanoyl-CoA + AMP + diphosphate. The enzyme catalyses 2-methylpropanoate + ATP + CoA = 2-methylpropanoyl-CoA + AMP + diphosphate. The catalysed reaction is 2-methylbutanoate + ATP + CoA = 2-methylbutanoyl-CoA + AMP + diphosphate. It carries out the reaction octanoate + ATP + CoA = octanoyl-CoA + AMP + diphosphate. Its function is as follows. Catalyzes the activation of fatty acids by CoA to produce an acyl-CoA, the first step in fatty acid metabolism. Capable of activating medium-chain fatty acids with a preference for isobutyrate among fatty acids with 2-6 carbon atoms. The chain is Acyl-coenzyme A synthetase ACSM3, mitochondrial (ACSM3) from Homo sapiens (Human).